Reading from the N-terminus, the 349-residue chain is Putative F-box/kelch-repeat protein At4g02310 (349 aa).

The F-box domain occupies 11–58 (SLFSLLPNDIVLNILARVPRWYHPILSCVSKNLRFLVSSSELKITRSL). One copy of the Kelch repeat lies at 154–204 (KIYVFGGIDDMNKRYYEGIHAQVFDLKTQTWHVGPNLSVKLACLNRSVVTP).

The sequence is that of Putative F-box/kelch-repeat protein At4g02310 from Arabidopsis thaliana (Mouse-ear cress).